A 332-amino-acid polypeptide reads, in one-letter code: Transaldolase (332 aa).

Lysine 136 (schiff-base intermediate with substrate) is an active-site residue.

Belongs to the transaldolase family. Type 1 subfamily.

The protein resides in the cytoplasm. The enzyme catalyses D-sedoheptulose 7-phosphate + D-glyceraldehyde 3-phosphate = D-erythrose 4-phosphate + beta-D-fructose 6-phosphate. It participates in carbohydrate degradation; pentose phosphate pathway; D-glyceraldehyde 3-phosphate and beta-D-fructose 6-phosphate from D-ribose 5-phosphate and D-xylulose 5-phosphate (non-oxidative stage): step 2/3. Transaldolase is important for the balance of metabolites in the pentose-phosphate pathway. This chain is Transaldolase, found in Trichormus variabilis (strain ATCC 29413 / PCC 7937) (Anabaena variabilis).